The sequence spans 1296 residues: Histone-lysine N-methyltransferase EHMT1 (1296 aa).

2 disordered regions span residues M1–T111 and P170–R200. A2 carries the N-acetylalanine modification. Basic and acidic residues predominate over residues Q14–T31. K23 participates in a covalent cross-link: Glycyl lysine isopeptide (Lys-Gly) (interchain with G-Cter in SUMO1); alternate. K23 participates in a covalent cross-link: Glycyl lysine isopeptide (Lys-Gly) (interchain with G-Cter in SUMO2); alternate. The segment covering N77–V89 has biased composition (polar residues). Residues V97 to K106 are compositionally biased toward basic and acidic residues. Glycyl lysine isopeptide (Lys-Gly) (interchain with G-Cter in SUMO2) cross-links involve residues K191, K229, K232, K315, and K325. A disordered region spans residues S341–A470. Acidic residues predominate over residues L342–H360. Positions E371–G391 are enriched in basic and acidic residues. The segment covering D392–L414 has biased composition (acidic residues). K430 participates in a covalent cross-link: Glycyl lysine isopeptide (Lys-Gly) (interchain with G-Cter in SUMO2). S433 is modified (phosphoserine). The span at P438–P450 shows a compositional bias: basic residues. S481 carries the phosphoserine modification. Glycyl lysine isopeptide (Lys-Gly) (interchain with G-Cter in SUMO2) cross-links involve residues K559, K644, K659, and K729. The disordered stretch occupies residues L653 to G714. ANK repeat units lie at residues F735–F764, S770–T799, D803–P832, E836–C866, G870–I899, E903–A932, H936–L965, and E969–V1002. The tract at residues E903 to N905 is histone H3K9me binding. S1046 carries the phosphoserine modification. A Pre-SET domain is found at Q1058–G1121. C1060, C1062, C1066, C1071, C1073, C1103, C1107, C1109, and C1113 together coordinate Zn(2+). Residues A1124 to G1241 enclose the SET domain. S-adenosyl-L-methionine contacts are provided by residues M1134–W1136, Y1171, and N1198–H1199. The tract at residues D1160–D1179 is interaction with histone H3. C1201 contacts Zn(2+). An interaction with histone H3 region spans residues Y1240–R1243. C1254 contacts Zn(2+). R1255 is an S-adenosyl-L-methionine binding site. The Zn(2+) site is built by C1256 and C1261. Residues R1271–L1296 are disordered.

Belongs to the class V-like SAM-binding methyltransferase superfamily. As to quaternary structure, interacts with WIZ. Part of the E2F6.com-1 complex in G0 phase composed of E2F6, MGA, MAX, TFDP1, CBX3, BAT8, EHMT1, RING1, RNF2, MBLR, L3MBTL2 and YAF2. Interacts with MPHOSPH8. Interacts with CDYL. Interacts with REST only in the presence of CDYL. Part of a complex containing at least CDYL, REST, WIZ, SETB1, EHMT1 and EHMT2. Heterodimer; heterodimerizes with EHMT2. Interacts (via ANK repeats) with RELA (when monomethylated at 'Lys-310'). Interacts with Baz2b. In terms of tissue distribution, ubiquitous.

Its subcellular location is the nucleus. It localises to the chromosome. The enzyme catalyses N(6)-methyl-L-lysyl(9)-[histone H3] + S-adenosyl-L-methionine = N(6),N(6)-dimethyl-L-lysyl(9)-[histone H3] + S-adenosyl-L-homocysteine + H(+). It carries out the reaction L-lysyl(9)-[histone H3] + S-adenosyl-L-methionine = N(6)-methyl-L-lysyl(9)-[histone H3] + S-adenosyl-L-homocysteine + H(+). Methyltransferase activity is inhibited by BIX-01294. Efficiently inhibited by compound E72, a BIX-01294 derivative in which the diazepane ring and the benzyl are replaced with a 3-dimethylaminopropyl and a 5-aminopentyl group at sites B and C, respectively. Histone methyltransferase that specifically mono- and dimethylates 'Lys-9' of histone H3 (H3K9me1 and H3K9me2, respectively) in euchromatin. H3K9me represents a specific tag for epigenetic transcriptional repression by recruiting HP1 proteins to methylated histones. Also weakly methylates 'Lys-27' of histone H3 (H3K27me). Also required for DNA methylation, the histone methyltransferase activity is not required for DNA methylation, suggesting that these 2 activities function independently. Probably targeted to histone H3 by different DNA-binding proteins like E2F6, MGA, MAX and/or DP1. During G0 phase, it probably contributes to silencing of MYC- and E2F-responsive genes, suggesting a role in G0/G1 transition in cell cycle. In addition to the histone methyltransferase activity, also methylates non-histone proteins: mediates dimethylation of 'Lys-373' of p53/TP53. Represses the expression of mitochondrial function-related genes, perhaps by occupying their promoter regions, working in concert with probable chromatin reader Baz2b. The protein is Histone-lysine N-methyltransferase EHMT1 (Ehmt1) of Mus musculus (Mouse).